The primary structure comprises 642 residues: Chaperone protein DnaK (642 aa).

Thr-199 is subject to Phosphothreonine; by autocatalysis. Residues 570 to 585 (EELEQASKDGDKEAID) are compositionally biased toward basic and acidic residues. The disordered stretch occupies residues 570 to 642 (EELEQASKDG…FEEVKDDDKK (73 aa)). The segment covering 600–620 (EAAQQQQAQQGAEGAAGGEQQ) has biased composition (low complexity). The span at 627 to 642 (DVVDAEFEEVKDDDKK) shows a compositional bias: acidic residues.

The protein belongs to the heat shock protein 70 family.

Acts as a chaperone. In Idiomarina loihiensis (strain ATCC BAA-735 / DSM 15497 / L2-TR), this protein is Chaperone protein DnaK.